The sequence spans 360 residues: Cinnamyl alcohol dehydrogenase 2 (360 aa).

In terms of domain architecture, Enoyl reductase (ER) spans 23-351 (GVLSPFNFSR…KADVKYRFVI (329 aa)). Position 50 (C50) interacts with Zn(2+). Position 52 (S52) interacts with an alcohol. Residue S52 coordinates NADP(+). Zn(2+) contacts are provided by D53, H72, E73, C103, C106, C109, C117, and C166. H72 contacts an alcohol. The NADP(+) site is built by L192, G194, L195, S214, T215, S216, K219, K220, V277, A279, S301, and R348.

It belongs to the zinc-containing alcohol dehydrogenase family. Class-P subfamily. As to quaternary structure, homodimer. Requires Zn(2+) as cofactor. As to expression, mainly expressed in young roots and, to a lower extent, in stems and leaves.

It localises to the cytoplasm. The catalysed reaction is (E)-cinnamyl alcohol + NADP(+) = (E)-cinnamaldehyde + NADPH + H(+). Its function is as follows. Alcohol dehydrogenase that catalyzes the conversion of (E)-cinnamyl alcohol to (E)-cinnamaldehyde. This Rauvolfia serpentina (Serpentine wood) protein is Cinnamyl alcohol dehydrogenase 2.